The chain runs to 131 residues: Small ribosomal subunit protein uS10m (131 aa).

It belongs to the universal ribosomal protein uS10 family.

The protein localises to the mitochondrion. The protein is Small ribosomal subunit protein uS10m (mrps10) of Dictyostelium discoideum (Social amoeba).